Reading from the N-terminus, the 883-residue chain is Phosphoenolpyruvate carboxylase (883 aa).

Active-site residues include histidine 138 and lysine 546.

Belongs to the PEPCase type 1 family. The cofactor is Mg(2+).

The enzyme catalyses oxaloacetate + phosphate = phosphoenolpyruvate + hydrogencarbonate. Its function is as follows. Forms oxaloacetate, a four-carbon dicarboxylic acid source for the tricarboxylic acid cycle. This chain is Phosphoenolpyruvate carboxylase, found in Salmonella dublin (strain CT_02021853).